The primary structure comprises 257 residues: Diphthine synthase (257 aa).

S-adenosyl-L-methionine-binding positions include leucine 9, aspartate 85, valine 88, 113–114 (SI), leucine 164, alanine 209, and histidine 234.

It belongs to the diphthine synthase family. Homodimer.

The catalysed reaction is 2-[(3S)-amino-3-carboxypropyl]-L-histidyl-[translation elongation factor 2] + 3 S-adenosyl-L-methionine = diphthine-[translation elongation factor 2] + 3 S-adenosyl-L-homocysteine + 3 H(+). It functions in the pathway protein modification; peptidyl-diphthamide biosynthesis. S-adenosyl-L-methionine-dependent methyltransferase that catalyzes the trimethylation of the amino group of the modified target histidine residue in translation elongation factor 2 (EF-2), to form an intermediate called diphthine. The three successive methylation reactions represent the second step of diphthamide biosynthesis. The polypeptide is Diphthine synthase (Methanocaldococcus jannaschii (strain ATCC 43067 / DSM 2661 / JAL-1 / JCM 10045 / NBRC 100440) (Methanococcus jannaschii)).